The following is a 208-amino-acid chain: Large ribosomal subunit protein uL3 (208 aa).

The tract at residues 117–149 is disordered; it reads GFQGAIKRHGQSRGPMAHGSRYHRRPGSMGPVA.

This sequence belongs to the universal ribosomal protein uL3 family. Part of the 50S ribosomal subunit. Forms a cluster with proteins L14 and L19.

Functionally, one of the primary rRNA binding proteins, it binds directly near the 3'-end of the 23S rRNA, where it nucleates assembly of the 50S subunit. This is Large ribosomal subunit protein uL3 from Exiguobacterium sp. (strain ATCC BAA-1283 / AT1b).